We begin with the raw amino-acid sequence, 253 residues long: Glucosamine-6-phosphate deaminase (253 aa).

The Proton acceptor; for enolization step role is filled by aspartate 65. The For ring-opening step role is filled by asparagine 133. Histidine 135 (proton acceptor; for ring-opening step) is an active-site residue. Glutamate 140 functions as the For ring-opening step in the catalytic mechanism.

The protein belongs to the glucosamine/galactosamine-6-phosphate isomerase family. NagB subfamily.

The catalysed reaction is alpha-D-glucosamine 6-phosphate + H2O = beta-D-fructose 6-phosphate + NH4(+). It participates in amino-sugar metabolism; N-acetylneuraminate degradation; D-fructose 6-phosphate from N-acetylneuraminate: step 5/5. Its function is as follows. Catalyzes the reversible isomerization-deamination of glucosamine 6-phosphate (GlcN6P) to form fructose 6-phosphate (Fru6P) and ammonium ion. The polypeptide is Glucosamine-6-phosphate deaminase (Corynebacterium efficiens (strain DSM 44549 / YS-314 / AJ 12310 / JCM 11189 / NBRC 100395)).